The chain runs to 548 residues: 4-methyl-5-nitrocatechol 5-monooxygenase (548 aa).

It belongs to the PheA/TfdB FAD monooxygenase family. Monomer. It depends on FAD as a cofactor.

It catalyses the reaction 4-methyl-5-nitrocatechol + NADPH + O2 = 2-hydroxy-5-methylquinone + nitrite + NADP(+) + H2O + H(+). The catalysed reaction is 4-methyl-5-nitrocatechol + NADH + O2 = 2-hydroxy-5-methylquinone + nitrite + NAD(+) + H2O + H(+). With respect to regulation, activated by magnesium or manganese ions. Inhibited by concentrations of 4-methyl-5-nitrocatechol (MNC) above 2 mM. Its function is as follows. Involved in the degradation of 2,4-dinitrotoluene (2,4-DNT). Catalyzes the removal of the nitro group from 4-methyl-5-nitrocatechol (MNC) to yield 2-hydroxy-5-methylquinone. It can use both NADH and NADPH as electron donors, but prefers NADPH. Also able to use 4-nitrocatechol as substrate. This is 4-methyl-5-nitrocatechol 5-monooxygenase from Burkholderia sp.